Consider the following 757-residue polypeptide: NAD(P)H-quinone oxidoreductase subunit 5, chloroplastic (757 aa).

17 helical membrane-spanning segments follow: residues 9–29 (WIIP…LLLV), 40–60 (WAFP…DLSV), 89–109 (IDPL…MVLI), 122–139 (LRFF…LGLV), 147–167 (IYIF…FWFT), 185–205 (GDFG…SFEF), 219–239 (NGVN…GAVA), 258–278 (TPIS…FLVA), 280–300 (LLPL…IGVI), 327–347 (LGYI…FHLI), 354–374 (ALLF…VGYS), 396–416 (MTFL…CFWS), 425–445 (WLYS…TAFY), 544–564 (LLPL…GIPF), 607–627 (SIAY…YLFF), 692–712 (GIMN…KYLG), and 718–738 (SYLF…IFFF).

The protein belongs to the complex I subunit 5 family. NDH is composed of at least 16 different subunits, 5 of which are encoded in the nucleus.

The protein resides in the plastid. It is found in the chloroplast thylakoid membrane. The catalysed reaction is a plastoquinone + NADH + (n+1) H(+)(in) = a plastoquinol + NAD(+) + n H(+)(out). It carries out the reaction a plastoquinone + NADPH + (n+1) H(+)(in) = a plastoquinol + NADP(+) + n H(+)(out). In terms of biological role, NDH shuttles electrons from NAD(P)H:plastoquinone, via FMN and iron-sulfur (Fe-S) centers, to quinones in the photosynthetic chain and possibly in a chloroplast respiratory chain. The immediate electron acceptor for the enzyme in this species is believed to be plastoquinone. Couples the redox reaction to proton translocation, and thus conserves the redox energy in a proton gradient. This is NAD(P)H-quinone oxidoreductase subunit 5, chloroplastic (ndhF) from Drimys granadensis.